The sequence spans 551 residues: 2,3-bisphosphoglycerate-independent phosphoglycerate mutase (551 aa).

Positions 22 and 74 each coordinate Mn(2+). Ser-74 serves as the catalytic Phosphoserine intermediate. Substrate-binding positions include His-135, 165-166 (RD), Arg-201, Arg-208, and 281-284 (RGDR). Asp-319 contacts Mn(2+). Lys-356 contributes to the substrate binding site. Residues Asp-424, His-428, Asp-465, His-466, and His-495 each coordinate Mn(2+).

This sequence belongs to the BPG-independent phosphoglycerate mutase family. Monomer. It depends on Mn(2+) as a cofactor.

The protein resides in the cytoplasm. The catalysed reaction is (2R)-2-phosphoglycerate = (2R)-3-phosphoglycerate. The protein operates within carbohydrate degradation; glycolysis; pyruvate from D-glyceraldehyde 3-phosphate: step 3/5. Its function is as follows. Catalyzes the interconversion of 2-phosphoglycerate (2-PGA) and 3-phosphoglycerate (3-PGA). This chain is 2,3-bisphosphoglycerate-independent phosphoglycerate mutase, found in Trypanosoma brucei brucei (strain 927/4 GUTat10.1).